Here is a 473-residue protein sequence, read N- to C-terminus: MATQAKRPRVAGPVDGGDLDPVACFLSWCRRVGLELSPKVSERAGGRRTRGGARAALTSPPAQVAVSRQGTVAGYGMVARESVQAGELLFVVPRAALLSQHTCSIGGLLERERVALQSQSGWVPLLLALLHELQAPASRWRPYFALWPELGRLEHPMFWPEEERRCLLQGTGVPEAVEKDLANIRSEYQSIVLPFMEAHPDLFSLRVRSLELYHQLVALVMAYSFQEPLEEEEDEKEPNSPVMVPAADILNHLANHNANLEYSANCLRMVATQPIPKGHEIFNTYGQMANWQLIHMYGFVEPYPDNTDDTADIQMVTVREAALQGTKTEAERHLVYERWDFLCKLEMVGEEGAFVIGREEVLTEEELTTTLKVLCMPAEEFRELKDQDGGGDDKREEGSLTITNIPKLKASWRQLLQNSVLLTLQTYATDLKTDQGLLSNKEVYAKLSWREQQALQVRYGQKMILHQLLELTS.

Lys39 is subject to N6-methylated lysine; by autocatalysis. In terms of domain architecture, SET spans 60–286 (PPAQVAVSRQ…KGHEIFNTYG (227 aa)). 73–75 (AGY) contributes to the S-adenosyl-L-methionine binding site. Trp122 contacts substrate. N6-methylated lysine; by autocatalysis is present on Lys179. Position 223 (Tyr223) interacts with S-adenosyl-L-methionine. Residues Ser224 and Gln226 each contribute to the substrate site. 251–252 (NH) is an S-adenosyl-L-methionine binding site. Substrate contacts are provided by Tyr262 and Tyr297. S-adenosyl-L-methionine is bound at residue Tyr297. Lys372 carries the post-translational modification N6-methylated lysine; by autocatalysis.

The protein belongs to the class V-like SAM-binding methyltransferase superfamily. Histone-lysine methyltransferase family. SETD6 subfamily. As to quaternary structure, monomer, homodimer and homotrimer; these structures are stabilized in the presence of S-adenosyl-L-methionine (SAM). Post-translationally, automethylated; Lys-39 and Lys-179 serve as the major automethylation sites.

It is found in the nucleus. The catalysed reaction is L-lysyl-[protein] + S-adenosyl-L-methionine = N(6)-methyl-L-lysyl-[protein] + S-adenosyl-L-homocysteine + H(+). It carries out the reaction L-lysyl(8)-[histone H2AZ] + S-adenosyl-L-methionine = N(6)-methyl-L-lysyl(8)-[histone H2AZ] + S-adenosyl-L-homocysteine + H(+). Its activity is regulated as follows. Activated by automethylation. Its function is as follows. Protein-lysine N-methyltransferase. Monomethylates 'Lys-310' of the RELA subunit of NF-kappa-B complex, leading to down-regulation of NF-kappa-B transcription factor activity. Monomethylates 'Lys-8' of H2AZ (H2AZK8me1). Required for the maintenance of embryonic stem cell self-renewal. Methylates PAK4. This is N-lysine methyltransferase SETD6 from Homo sapiens (Human).